Reading from the N-terminus, the 302-residue chain is Protoheme IX farnesyltransferase (302 aa).

The next 9 helical transmembrane spans lie at 27-47, 48-68, 97-117, 119-139, 148-168, 176-196, 219-239, 240-260, and 280-300; these read VLTL…QSIH, PVLG…AGAL, SALH…GLAL, VLAA…YTIW, IVIG…AATG, LLFA…ALFI, IQIM…WAMG, LTGA…LLLA, and LFGF…ADKV.

Belongs to the UbiA prenyltransferase family. Protoheme IX farnesyltransferase subfamily.

Its subcellular location is the cell inner membrane. The catalysed reaction is heme b + (2E,6E)-farnesyl diphosphate + H2O = Fe(II)-heme o + diphosphate. The protein operates within porphyrin-containing compound metabolism; heme O biosynthesis; heme O from protoheme: step 1/1. Converts heme B (protoheme IX) to heme O by substitution of the vinyl group on carbon 2 of heme B porphyrin ring with a hydroxyethyl farnesyl side group. The sequence is that of Protoheme IX farnesyltransferase from Rhizorhabdus wittichii (strain DSM 6014 / CCUG 31198 / JCM 15750 / NBRC 105917 / EY 4224 / RW1) (Sphingomonas wittichii).